The primary structure comprises 270 residues: uncharacterized protein (270 aa).

The 50-residue stretch at 1–50 (LTEVVKAQSFTKAAENLYTSQPSISRDIKRLENDYDVKVFEFKHSKMTLT) folds into the HTH lysR-type domain. Positions 10-29 (FTKAAENLYTSQPSISRDIK) form a DNA-binding region, H-T-H motif.

The protein belongs to the LysR transcriptional regulatory family.

This is an uncharacterized protein from Staphylococcus xylosus.